The primary structure comprises 354 residues: Uroporphyrinogen decarboxylase (354 aa).

Substrate-binding positions include 30-34 (RQAGR), aspartate 79, tyrosine 154, serine 209, and histidine 333.

It belongs to the uroporphyrinogen decarboxylase family. In terms of assembly, homodimer.

It localises to the cytoplasm. The enzyme catalyses uroporphyrinogen III + 4 H(+) = coproporphyrinogen III + 4 CO2. The protein operates within porphyrin-containing compound metabolism; protoporphyrin-IX biosynthesis; coproporphyrinogen-III from 5-aminolevulinate: step 4/4. Functionally, catalyzes the decarboxylation of four acetate groups of uroporphyrinogen-III to yield coproporphyrinogen-III. The chain is Uroporphyrinogen decarboxylase from Mycolicibacterium gilvum (strain PYR-GCK) (Mycobacterium gilvum (strain PYR-GCK)).